The primary structure comprises 237 residues: Phosphoribosylaminoimidazole-succinocarboxamide synthase (237 aa).

It belongs to the SAICAR synthetase family.

The catalysed reaction is 5-amino-1-(5-phospho-D-ribosyl)imidazole-4-carboxylate + L-aspartate + ATP = (2S)-2-[5-amino-1-(5-phospho-beta-D-ribosyl)imidazole-4-carboxamido]succinate + ADP + phosphate + 2 H(+). It functions in the pathway purine metabolism; IMP biosynthesis via de novo pathway; 5-amino-1-(5-phospho-D-ribosyl)imidazole-4-carboxamide from 5-amino-1-(5-phospho-D-ribosyl)imidazole-4-carboxylate: step 1/2. This Listeria monocytogenes serotype 4b (strain CLIP80459) protein is Phosphoribosylaminoimidazole-succinocarboxamide synthase.